A 79-amino-acid polypeptide reads, in one-letter code: Putative transmembrane protein ORF17 (79 aa).

The next 2 membrane-spanning stretches (helical) occupy residues 8–28 (LMIY…IMYY) and 50–70 (VFVM…TTTI).

Its subcellular location is the host membrane. The protein is Putative transmembrane protein ORF17 of Haloarcula hispanica (His1V).